The following is a 171-amino-acid chain: ATP synthase subunit b (171 aa).

Residues 26 to 48 form a helical membrane-spanning segment; the sequence is LINLAIIIGLLVYAGRGFLGNLL.

This sequence belongs to the ATPase B chain family. In terms of assembly, F-type ATPases have 2 components, F(1) - the catalytic core - and F(0) - the membrane proton channel. F(1) has five subunits: alpha(3), beta(3), gamma(1), delta(1), epsilon(1). F(0) has four main subunits: a(1), b(1), b'(1) and c(10-14). The alpha and beta chains form an alternating ring which encloses part of the gamma chain. F(1) is attached to F(0) by a central stalk formed by the gamma and epsilon chains, while a peripheral stalk is formed by the delta, b and b' chains.

The protein resides in the cellular thylakoid membrane. Its function is as follows. F(1)F(0) ATP synthase produces ATP from ADP in the presence of a proton or sodium gradient. F-type ATPases consist of two structural domains, F(1) containing the extramembraneous catalytic core and F(0) containing the membrane proton channel, linked together by a central stalk and a peripheral stalk. During catalysis, ATP synthesis in the catalytic domain of F(1) is coupled via a rotary mechanism of the central stalk subunits to proton translocation. Functionally, component of the F(0) channel, it forms part of the peripheral stalk, linking F(1) to F(0). The chain is ATP synthase subunit b from Synechococcus elongatus (strain ATCC 33912 / PCC 7942 / FACHB-805) (Anacystis nidulans R2).